Here is a 751-residue protein sequence, read N- to C-terminus: Semaphorin-3C (751 aa).

The first 21 residues, 1-21, serve as a signal peptide directing secretion; the sequence is MAFRTICVLVGVFICSICVKG. The Sema domain maps to 28-511; the sequence is RVYLTFDELR…SNEGVSQVSL (484 aa). N81 carries N-linked (GlcNAc...) asparagine glycosylation. A disulfide bridge links C101 with C112. N123 carries an N-linked (GlcNAc...) asparagine glycan. C130 and C139 are oxidised to a cystine. 2 N-linked (GlcNAc...) asparagine glycosylation sites follow: N252 and N268. Cystine bridges form between C266/C378 and C290/C338. N-linked (GlcNAc...) asparagine glycosylation is present at N465. Cysteines 514 and 532 form a disulfide. The Ig-like C2-type domain occupies 571 to 655; it reads AYRNAAEIVQ…TENSFKQTIA (85 aa). Residues N585 and N586 are each glycosylated (N-linked (GlcNAc...) asparagine). C592 and C643 are oxidised to a cystine. The segment covering 712–731 has biased composition (basic and acidic residues); sequence TRQQHQQGDESQKMRGDYGK. The tract at residues 712-751 is disordered; the sequence is TRQQHQQGDESQKMRGDYGKLKALINSRKSRNRRNQLPES.

The protein belongs to the semaphorin family. In terms of assembly, interacts with PLXND1.

It is found in the secreted. Binds to plexin family members and plays an important role in the regulation of developmental processes. Required for normal cardiovascular development during embryogenesis. Functions as attractant for growing axons, and thereby plays an important role in axon growth and axon guidance. The chain is Semaphorin-3C (SEMA3C) from Pongo abelii (Sumatran orangutan).